The chain runs to 154 residues: SsrA-binding protein (154 aa).

A disordered region spans residues 134–154 (ETLRRRDAKREVERALKEKNR).

The protein belongs to the SmpB family.

Its subcellular location is the cytoplasm. Functionally, required for rescue of stalled ribosomes mediated by trans-translation. Binds to transfer-messenger RNA (tmRNA), required for stable association of tmRNA with ribosomes. tmRNA and SmpB together mimic tRNA shape, replacing the anticodon stem-loop with SmpB. tmRNA is encoded by the ssrA gene; the 2 termini fold to resemble tRNA(Ala) and it encodes a 'tag peptide', a short internal open reading frame. During trans-translation Ala-aminoacylated tmRNA acts like a tRNA, entering the A-site of stalled ribosomes, displacing the stalled mRNA. The ribosome then switches to translate the ORF on the tmRNA; the nascent peptide is terminated with the 'tag peptide' encoded by the tmRNA and targeted for degradation. The ribosome is freed to recommence translation, which seems to be the essential function of trans-translation. The polypeptide is SsrA-binding protein (Halalkalibacterium halodurans (strain ATCC BAA-125 / DSM 18197 / FERM 7344 / JCM 9153 / C-125) (Bacillus halodurans)).